A 596-amino-acid polypeptide reads, in one-letter code: Elongation factor 4 (596 aa).

The tr-type G domain maps to 2–184 (KNIRNFAIIA…SIVKYIPPPE (183 aa)). Residues 14–19 (DHGKST) and 131–134 (NKID) contribute to the GTP site.

Belongs to the TRAFAC class translation factor GTPase superfamily. Classic translation factor GTPase family. LepA subfamily.

It localises to the cell inner membrane. It catalyses the reaction GTP + H2O = GDP + phosphate + H(+). Functionally, required for accurate and efficient protein synthesis under certain stress conditions. May act as a fidelity factor of the translation reaction, by catalyzing a one-codon backward translocation of tRNAs on improperly translocated ribosomes. Back-translocation proceeds from a post-translocation (POST) complex to a pre-translocation (PRE) complex, thus giving elongation factor G a second chance to translocate the tRNAs correctly. Binds to ribosomes in a GTP-dependent manner. This chain is Elongation factor 4, found in Neorickettsia sennetsu (strain ATCC VR-367 / Miyayama) (Ehrlichia sennetsu).